The chain runs to 288 residues: Cyclin-dependent kinase 2 homolog (288 aa).

The 281-residue stretch at 4-284 folds into the Protein kinase domain; the sequence is YHGLEKIGEG…AKQALEHAYF (281 aa). ATP-binding positions include 10–18 and lysine 32; that span reads IGEGTYGVV. Phosphothreonine is present on threonine 14. A Phosphotyrosine modification is found at tyrosine 15. Aspartate 125 functions as the Proton acceptor in the catalytic mechanism. A Phosphothreonine modification is found at threonine 158.

This sequence belongs to the protein kinase superfamily. CMGC Ser/Thr protein kinase family. CDC2/CDKX subfamily. As to quaternary structure, may form a complex composed of at least the catalytic subunit CRK2 and a cyclin. Requires Mg(2+) as cofactor. In terms of processing, autophosphorylates in presence of cyclin cyc-1 but not in presence of cyclin cyc-3.

The protein resides in the cytoplasm. The catalysed reaction is L-seryl-[protein] + ATP = O-phospho-L-seryl-[protein] + ADP + H(+). It carries out the reaction L-threonyl-[protein] + ATP = O-phospho-L-threonyl-[protein] + ADP + H(+). It catalyses the reaction [DNA-directed RNA polymerase] + ATP = phospho-[DNA-directed RNA polymerase] + ADP + H(+). Phosphorylation at Thr-14 or Tyr-15 inactivates the enzyme, while phosphorylation at Thr-158 activates it. Activated by cyclin cyc-1 in vitro. Activated by cyclin cyc-3 in vitro. In terms of biological role, serine/threonine-protein kinase. Involved in the control of the cell cycle. Required for entry into S-phase and mitosis. Probable component of the kinase complex that phosphorylates the repetitive C-terminus of RNA polymerase II. In schizonts, phosphorylates ORC1 resulting in its dissociation from DNA, relocalization to the cytoplasm and likely its degradation. The chain is Cyclin-dependent kinase 2 homolog from Plasmodium falciparum (isolate 3D7).